The chain runs to 128 residues: Glycine cleavage system H protein 2 (128 aa).

The region spanning 24 to 105 (TVTVGISDHA…PYSAWIFKVK (82 aa)) is the Lipoyl-binding domain. Lys65 is subject to N6-lipoyllysine.

This sequence belongs to the GcvH family. As to quaternary structure, the glycine cleavage system is composed of four proteins: P, T, L and H. The cofactor is (R)-lipoate.

In terms of biological role, the glycine cleavage system catalyzes the degradation of glycine. The H protein shuttles the methylamine group of glycine from the P protein to the T protein. The sequence is that of Glycine cleavage system H protein 2 from Pseudomonas syringae pv. tomato (strain ATCC BAA-871 / DC3000).